The chain runs to 124 residues: Small ribosomal subunit protein bS6 (124 aa).

The span at 105-115 shows a compositional bias: basic and acidic residues; it reads EVQHEEARKSA. Residues 105–124 form a disordered region; sequence EVQHEEARKSAQSDAPVAAA.

It belongs to the bacterial ribosomal protein bS6 family.

Functionally, binds together with bS18 to 16S ribosomal RNA. The chain is Small ribosomal subunit protein bS6 from Polynucleobacter necessarius subsp. necessarius (strain STIR1).